Here is a 794-residue protein sequence, read N- to C-terminus: Phosphoenolpyruvate synthase (794 aa).

His422 acts as the Tele-phosphohistidine intermediate in catalysis. Substrate is bound by residues Arg512, Arg579, Glu681, Gly702, Ser703, Asn704, and Asp705. Glu681 contributes to the Mg(2+) binding site. A Mg(2+)-binding site is contributed by Asp705. Cys752 serves as the catalytic Proton donor.

The protein belongs to the PEP-utilizing enzyme family. It depends on Mg(2+) as a cofactor.

It carries out the reaction pyruvate + ATP + H2O = phosphoenolpyruvate + AMP + phosphate + 2 H(+). It participates in carbohydrate biosynthesis; gluconeogenesis. Its function is as follows. Catalyzes the phosphorylation of pyruvate to phosphoenolpyruvate. The chain is Phosphoenolpyruvate synthase (ppsA) from Neisseria meningitidis serogroup B (strain ATCC BAA-335 / MC58).